The following is a 264-amino-acid chain: Apolipoprotein A-I (264 aa).

The first 18 residues, 1 to 18 (MKAVVLAVALVFLTGSQA), serve as a signal peptide directing secretion. Repeat copies occupy residues 67–88 (LNLL…ERLG) and 89–110 (PLTR…QEMN). The interval 67 to 264 (LNLLENWDTL…DKARETLTAQ (198 aa)) is 10 X approximate tandem repeats. A Methionine sulfoxide modification is found at Met109. One copy of the 3; half-length repeat lies at 111-121 (KDLEEVKQNVQ). 3 repeat units span residues 122-143 (PYLD…QRVA), 144-165 (PLGA…GKLS), and 166-187 (PVAE…TQLA). The 7; truncated repeat unit spans residues 188–207 (PHSDKLRESLAQRLAELKSN). Residues 208–229 (PTLNEYHTRAKTHLNTFGEKAR) form repeat 8. A 9; half-length repeat occupies 230-240 (PALEDLRHTLI). Repeat 10 spans residues 241 to 264 (PILDTLKTKVKSVIDKARETLTAQ).

It belongs to the apolipoprotein A1/A4/E family. In terms of assembly, homodimer. Interacts with APOA1BP and CLU. Component of a sperm activating protein complex (SPAP), consisting of APOA1, an immunoglobulin heavy chain, an immunoglobulin light chain and albumin. Interacts with NDRG1. Interacts with SCGB3A2. Interacts with NAXE and YJEFN3. In terms of processing, glycosylated. Palmitoylated. Post-translationally, phosphorylation sites are present in the extracellular medium.

The protein resides in the secreted. Functionally, participates in the reverse transport of cholesterol from tissues to the liver for excretion by promoting cholesterol efflux from tissues and by acting as a cofactor for the lecithin cholesterol acyltransferase (LCAT). As part of the SPAP complex, activates spermatozoa motility. The chain is Apolipoprotein A-I (Apoa1) from Mus pahari (Gairdner's shrew-mouse).